The primary structure comprises 358 residues: Trace amine-associated receptor 7d (358 aa).

The Extracellular segment spans residues 1–47; sequence MRVDDDRFPWDQDSILSRDLLSASSLQLCYENLNRSCVRSPYSPGPR. A glycan (N-linked (GlcNAc...) asparagine) is linked at N34. 2 cysteine pairs are disulfide-bonded: C37–C201 and C120–C205. The chain crosses the membrane as a helical span at residues 48-68; sequence LILYAVFGFGAVLAVCGNLMV. The Cytoplasmic segment spans residues 69 to 83; it reads MTSILHFRQLHSPAN. Residues 84 to 104 form a helical membrane-spanning segment; sequence FLVASLACADFLVGLTVMPFS. Over 105–122 the chain is Extracellular; sequence MVRSVEGCWYFGDTYCKL. The chain crosses the membrane as a helical span at residues 123–143; the sequence is HTCFDVSFCYCSLFHLCFISV. Residues 144–166 are Cytoplasmic-facing; sequence DRYIAVSDPLIYPTRFTASVSGK. The helical transmembrane segment at 167–187 threads the bilayer; it reads CITFSWLLSIIYGFPLIYTGA. Residues 188 to 212 lie on the Extracellular side of the membrane; the sequence is SEAGLEDLVSALTCVGGCQIPMNQK. A helical transmembrane segment spans residues 213–233; that stretch reads FVLINFLLFLVPTLVMMTVYS. At 234 to 274 the chain is on the cytoplasmic side; sequence KIFLIARQQAQNIEKMRKQTARASESYKDRVCKRERKAAKT. A helical transmembrane segment spans residues 275-295; the sequence is LGIAVAAFLLSWLPYFIDSII. Topologically, residues 296–309 are extracellular; the sequence is DAFLGFITPTYVYE. A helical membrane pass occupies residues 310 to 333; that stretch reads ILIWIVYYNSSMNPLIYAFFYPWF. Residues 334 to 358 are Cytoplasmic-facing; it reads RKATKLIVTGKILRENSSTINLFPE.

Belongs to the G-protein coupled receptor 1 family.

Its subcellular location is the cell membrane. Its function is as follows. Olfactory receptor specific for N,N-dimethylalkylamines trace amines, such as N,N-dimethylcyclohexylamine. Trace amine compounds are enriched in animal body fluids and act on trace amine-associated receptors (TAARs) to elicit both intraspecific and interspecific innate behaviors. Ligand-binding causes a conformation change that triggers signaling via G(s)-class of G alpha proteins (GNAL or GNAS). In Rattus norvegicus (Rat), this protein is Trace amine-associated receptor 7d.